Reading from the N-terminus, the 550-residue chain is Arginine--tRNA ligase (550 aa).

The 'HIGH' region signature appears at 130 to 140; it reads ANPTGPIHLGG.

Belongs to the class-I aminoacyl-tRNA synthetase family. As to quaternary structure, monomer.

It is found in the cytoplasm. It catalyses the reaction tRNA(Arg) + L-arginine + ATP = L-arginyl-tRNA(Arg) + AMP + diphosphate. In Corynebacterium diphtheriae (strain ATCC 700971 / NCTC 13129 / Biotype gravis), this protein is Arginine--tRNA ligase.